A 103-amino-acid chain; its full sequence is Histone H4 (103 aa).

Residues 1-14 show a composition bias toward gly residues; the sequence is MTGRGKGGKGLGKG. The segment at 1 to 20 is disordered; it reads MTGRGKGGKGLGKGGAKRHR. 2 positions are modified to N6-acetyl-N6-methyllysine; alternate: Lys-6 and Lys-13. A DNA-binding region spans residues 17 to 21; the sequence is KRHRK.

The protein belongs to the histone H4 family. As to quaternary structure, the nucleosome is a histone octamer containing two molecules each of H2A, H2B, H3 and H4 assembled in one H3-H4 heterotetramer and two H2A-H2B heterodimers. The octamer wraps approximately 147 bp of DNA.

The protein localises to the nucleus. The protein resides in the chromosome. Core component of nucleosome. Nucleosomes wrap and compact DNA into chromatin, limiting DNA accessibility to the cellular machineries which require DNA as a template. Histones thereby play a central role in transcription regulation, DNA repair, DNA replication and chromosomal stability. DNA accessibility is regulated via a complex set of post-translational modifications of histones, also called histone code, and nucleosome remodeling. In Diadromus pulchellus (Parasitic wasp), this protein is Histone H4.